The following is a 381-amino-acid chain: 4-hydroxy-3-methylbut-2-en-1-yl diphosphate synthase (flavodoxin) (381 aa).

Residues Cys-280, Cys-283, Cys-315, and Glu-322 each coordinate [4Fe-4S] cluster.

Belongs to the IspG family. The cofactor is [4Fe-4S] cluster.

The enzyme catalyses (2E)-4-hydroxy-3-methylbut-2-enyl diphosphate + oxidized [flavodoxin] + H2O + 2 H(+) = 2-C-methyl-D-erythritol 2,4-cyclic diphosphate + reduced [flavodoxin]. It functions in the pathway isoprenoid biosynthesis; isopentenyl diphosphate biosynthesis via DXP pathway; isopentenyl diphosphate from 1-deoxy-D-xylulose 5-phosphate: step 5/6. Converts 2C-methyl-D-erythritol 2,4-cyclodiphosphate (ME-2,4cPP) into 1-hydroxy-2-methyl-2-(E)-butenyl 4-diphosphate. The chain is 4-hydroxy-3-methylbut-2-en-1-yl diphosphate synthase (flavodoxin) from Clavibacter sepedonicus (Clavibacter michiganensis subsp. sepedonicus).